The sequence spans 173 residues: Photosystem I assembly protein Ycf3 (173 aa).

TPR repeat units follow at residues 35–68, 72–105, and 120–153; these read AFVY…EENP, SYIL…NPKM, and GEKA…APNN.

Belongs to the Ycf3 family.

Its subcellular location is the cellular thylakoid membrane. In terms of biological role, essential for the assembly of the photosystem I (PSI) complex. May act as a chaperone-like factor to guide the assembly of the PSI subunits. The polypeptide is Photosystem I assembly protein Ycf3 (Synechocystis sp. (strain ATCC 27184 / PCC 6803 / Kazusa)).